Here is a 298-residue protein sequence, read N- to C-terminus: N-acetylmuramic acid 6-phosphate etherase (298 aa).

The 164-residue stretch at 55–218 (IHAQVSGGGR…STGLMIKSGK (164 aa)) folds into the SIS domain. Glutamate 83 acts as the Proton donor in catalysis. Residue glutamate 114 is part of the active site.

It belongs to the GCKR-like family. MurNAc-6-P etherase subfamily. As to quaternary structure, homodimer.

It catalyses the reaction N-acetyl-D-muramate 6-phosphate + H2O = N-acetyl-D-glucosamine 6-phosphate + (R)-lactate. Its pathway is amino-sugar metabolism; N-acetylmuramate degradation. The protein operates within amino-sugar metabolism; 1,6-anhydro-N-acetylmuramate degradation. It functions in the pathway cell wall biogenesis; peptidoglycan recycling. Its function is as follows. Specifically catalyzes the cleavage of the D-lactyl ether substituent of MurNAc 6-phosphate, producing GlcNAc 6-phosphate and D-lactate. Together with AnmK, is also required for the utilization of anhydro-N-acetylmuramic acid (anhMurNAc) either imported from the medium or derived from its own cell wall murein, and thus plays a role in cell wall recycling. This chain is N-acetylmuramic acid 6-phosphate etherase, found in Escherichia coli (strain K12 / MC4100 / BW2952).